The following is a 75-amino-acid chain: Acyl carrier protein (75 aa).

The 75-residue stretch at 1–75 (MSVFDKVKSI…DAVNYIKENQ (75 aa)) folds into the Carrier domain. An O-(pantetheine 4'-phosphoryl)serine modification is found at Ser35.

Belongs to the acyl carrier protein (ACP) family. In terms of processing, 4'-phosphopantetheine is transferred from CoA to a specific serine of apo-ACP by AcpS. This modification is essential for activity because fatty acids are bound in thioester linkage to the sulfhydryl of the prosthetic group.

Its subcellular location is the cytoplasm. Its pathway is lipid metabolism; fatty acid biosynthesis. Functionally, carrier of the growing fatty acid chain in fatty acid biosynthesis. The protein is Acyl carrier protein of Desulfitobacterium hafniense (strain Y51).